A 122-amino-acid polypeptide reads, in one-letter code: Large ribosomal subunit protein bL12 (122 aa).

The protein belongs to the bacterial ribosomal protein bL12 family. As to quaternary structure, homodimer. Part of the ribosomal stalk of the 50S ribosomal subunit. Forms a multimeric L10(L12)X complex, where L10 forms an elongated spine to which 2 to 4 L12 dimers bind in a sequential fashion. Binds GTP-bound translation factors.

Functionally, forms part of the ribosomal stalk which helps the ribosome interact with GTP-bound translation factors. Is thus essential for accurate translation. This chain is Large ribosomal subunit protein bL12, found in Stenotrophomonas maltophilia (strain R551-3).